Here is a 691-residue protein sequence, read N- to C-terminus: Replication and transcription activator (691 aa).

2 O-linked (GlcNAc) threonine; by host glycosylation sites follow: threonine 366 and threonine 367. Disordered regions lie at residues 482 to 582 (EASG…SLPP) and 626 to 677 (LDTP…QESG). Over residues 504–513 (TAAATAAEAT) the composition is skewed to low complexity. Residues 515–531 (PKRKQRSKERSSKKRKA) show a composition bias toward basic residues. Residues 539–556 (TTPSTTTPGTSLGSITTP) are compositionally biased toward low complexity. Positions 655–677 (EYTQLQPVRATSATPANEVQESG) are enriched in polar residues.

It belongs to the herpesviridae TAF50 family. As to quaternary structure, homotetramer. Interacts with KTA/ORF57. Interacts with host PARP1; this interaction negatively regulates RTA/ORF50 transactivation activity. Interacts with host SMC5 and SMC6; these interactions remove the repressive chromatin structure to allow viral reactivation. Interacts with host POU2F1; this interaction enhances RTA/ORF50-mediated transactivation of several viral promoters including K-bZIP promoter.

It localises to the host nucleus. It carries out the reaction S-ubiquitinyl-[E2 ubiquitin-conjugating enzyme]-L-cysteine + [acceptor protein]-L-lysine = [E2 ubiquitin-conjugating enzyme]-L-cysteine + N(6)-ubiquitinyl-[acceptor protein]-L-lysine.. In terms of biological role, transcriptional transactivator that is necessary and sufficient for reactivation of the virus from latency. Acts post-transcriptionally and transcriptionally to regulate viral lytic gene expression and synergistically with ORF57 activates certain early and late viral promoters including its own promoter. Autostimulation on its promoter is mediated by the formation of a ternary complex between ORF50 and the cellular components HGMB1 and POU2F1. Also possesses a bimodal activity in targeting proteins for degradation through using its own E3 ligase activity or by stabilizing and chaperoning host E3 ligases. These activities help to subvert the host innate and adaptive immune responses while also modulating the host transcriptome and protein landscape to promote virus production. For instance, targets the host SMC5/6 complex for ubiquitination and subsequent degradation through the ubiquitin-proteasome during reactivation while during latency, host SMC5/6 complex binds to the viral episome and condenses viral chromatin, creating a repressive chromatin structure to silence genome transcription. Hijacks the cellular E3 ligase complex RNF20/40 to increase the level of transcriptionally active RNA polymerase II on viral gene promoters thereby facilitating lytic gene expression. Acts as a SUMO-targeting ubiquitin ligase and affects general sumoylation of cellular proteins. Promotes the polyubiquitination and subsequent degradation of host MYD88 and thereby inhibits MYD88-mediated TLR4 signaling. Induces the degradation of vFLIP/ORF71 together with cellular ubiquitin ligase ITCH to prevent vFLIP-induced NF-kappa-B signaling. The sequence is that of Replication and transcription activator (ORF50) from Homo sapiens (Human).